The following is a 177-amino-acid chain: Parathyroid hormone-related protein (177 aa).

The first 24 residues, methionine 1–glycine 24, serve as a signal peptide directing secretion. Positions arginine 25 to leucine 34 are excised as a propeptide. Residues arginine 57–histidine 68 are important for receptor binding. Residues alanine 74–histidine 177 are disordered. The span at serine 76–asparagine 90 shows a compositional bias: polar residues. The Nuclear localization signal motif lies at threonine 108–lysine 129. Residues asparagine 109–proline 118 are compositionally biased toward basic and acidic residues. The span at proline 122–lysine 132 shows a compositional bias: basic residues.

Belongs to the parathyroid hormone family. As to quaternary structure, PTHrP interacts with PTH1R (via N-terminal extracellular domain). There are several secretory forms, including osteostatin, arising from endoproteolytic cleavage of the initial translation product. Each of these secretory forms is believed to have one or more of its own receptors that mediates the normal paracrine, autocrine and endocrine actions.

Its subcellular location is the secreted. The protein resides in the cytoplasm. It localises to the nucleus. Its function is as follows. Neuroendocrine peptide which is a critical regulator of cellular and organ growth, development, migration, differentiation and survival and of epithelial calcium ion transport. Acts by binding to its receptor, PTH1R, activating G protein-coupled receptor signaling. Regulates endochondral bone development and epithelial-mesenchymal interactions during the formation of the mammary glands and teeth. Required for skeletal homeostasis. Promotes mammary mesenchyme differentiation and bud outgrowth by modulating mesenchymal cell responsiveness to BMPs. Up-regulates BMPR1A expression in the mammary mesenchyme and this increases the sensitivity of these cells to BMPs and allows them to respond to BMP4 in a paracrine and/or autocrine fashion. BMP4 signaling in the mesenchyme, in turn, triggers epithelial outgrowth and augments MSX2 expression, which causes the mammary mesenchyme to inhibit hair follicle formation within the nipple sheath. Potent inhibitor of osteoclastic bone resorption. This is Parathyroid hormone-related protein (PTHLH) from Oryctolagus cuniculus (Rabbit).